A 907-amino-acid chain; its full sequence is Coatomer subunit beta'-1 (907 aa).

9 WD repeats span residues 13–52 (QRSE…MVKS), 55–94 (VSEL…KVKV), 97–136 (AHTD…MCTQ), 140–180 (GHSH…PNFT), 183–224 (GHQK…CVQT), 227–266 (GHTH…LENT), 269–309 (YGLE…ASMD), 351–389 (SCDL…NRSF), and 461–501 (RIDV…SYLE). Composition is skewed to acidic residues over residues 850-866 (ETED…EEVL) and 874-887 (STDE…DEPE). The disordered stretch occupies residues 850–887 (ETEDALDENGEPDEEVLEENKVEESTDEAVEVDADEPE).

It belongs to the WD repeat COPB2 family. In terms of assembly, oligomeric complex that consists of at least the alpha, beta, beta', gamma, delta, epsilon and zeta subunits.

It is found in the cytoplasm. The protein localises to the golgi apparatus membrane. The protein resides in the cytoplasmic vesicle. It localises to the COPI-coated vesicle membrane. In terms of biological role, the coatomer is a cytosolic protein complex that binds to dilysine motifs and reversibly associates with Golgi non-clathrin-coated vesicles, which further mediate biosynthetic protein transport from the ER, via the Golgi up to the trans Golgi network. Coatomer complex is required for budding from Golgi membranes, and is essential for the retrograde Golgi-to-ER transport of dilysine-tagged proteins. This is Coatomer subunit beta'-1 from Oryza sativa subsp. japonica (Rice).